Reading from the N-terminus, the 195-residue chain is UMP-CMP kinase (195 aa).

17–22 (GSGKGT) contributes to the ATP binding site. Residues 37-66 (SAGDLLRQEQQSGSKDGEMIATMIKNGEIV) form an NMP region. A ribonucleoside 5'-phosphate is bound by residues Arg43, 64 to 66 (EIV), and 91 to 94 (GFPR). Asn98 contacts CMP. An LID region spans residues 131–141 (KRGESSGRSDD). Arg132 lines the ATP pocket. A ribonucleoside 5'-phosphate is bound by residues Arg138 and Arg149. ATP is bound at residue Arg177.

This sequence belongs to the adenylate kinase family. UMP-CMP kinase subfamily. As to quaternary structure, monomer. Mg(2+) is required as a cofactor.

The protein localises to the cytoplasm. Its subcellular location is the nucleus. It catalyses the reaction CMP + ATP = CDP + ADP. It carries out the reaction dCMP + ATP = dCDP + ADP. The enzyme catalyses UMP + ATP = UDP + ADP. Its function is as follows. Catalyzes the phosphorylation of pyrimidine nucleoside monophosphates at the expense of ATP. Plays an important role in de novo pyrimidine nucleotide biosynthesis. Has preference for UMP and CMP as phosphate acceptors. This Dictyostelium discoideum (Social amoeba) protein is UMP-CMP kinase.